Reading from the N-terminus, the 229-residue chain is GTP cyclohydrolase 1 (229 aa).

A disordered region spans residues 1 to 31 (MFRESDNTIAPSNQDLNKPVVDKEQPAERTP). Over residues 7–16 (NTIAPSNQDL) the composition is skewed to polar residues. Zn(2+) contacts are provided by C117, H120, and C188.

The protein belongs to the GTP cyclohydrolase I family. In terms of assembly, toroid-shaped homodecamer, composed of two pentamers of five dimers.

It catalyses the reaction GTP + H2O = 7,8-dihydroneopterin 3'-triphosphate + formate + H(+). The protein operates within cofactor biosynthesis; 7,8-dihydroneopterin triphosphate biosynthesis; 7,8-dihydroneopterin triphosphate from GTP: step 1/1. The chain is GTP cyclohydrolase 1 from Rhodopirellula baltica (strain DSM 10527 / NCIMB 13988 / SH1).